Here is a 297-residue protein sequence, read N- to C-terminus: GTP-binding protein REM 1 (297 aa).

The segment covering 1–10 (MTLNTQQEAK) has biased composition (polar residues). Residues 1–73 (MTLNTQQEAK…DGWSSESSDS (73 aa)) form a disordered region. Phosphoserine is present on Ser-51. Positions 64–73 (DGWSSESSDS) are enriched in low complexity. GTP contacts are provided by residues 87–94 (GDPGVGKT) and 194–197 (NKAD). A calmodulin-binding region spans residues 267–286 (ARRFLARLTARSARRRALKA).

This sequence belongs to the small GTPase superfamily. RGK family. In vitro, interacts with calmodulin in a calcium-dependent manner. Interacts 14-3-3 family members including YWHAE, YWHAH, YWHAQ, YWHAZ in a phosphorylation-dependent manner. In terms of tissue distribution, high expression in cardiac muscle. Moderate expression in lung, skeletal muscle and kidney. Low levels in spleen and brain.

Its function is as follows. Promotes endothelial cell sprouting and actin cytoskeletal reorganization. May be involved in angiogenesis. May function in Ca(2+) signaling. This Mus musculus (Mouse) protein is GTP-binding protein REM 1 (Rem1).